Consider the following 503-residue polypeptide: ATP synthase subunit alpha (503 aa).

169–176 serves as a coordination point for ATP; that stretch reads GDRSTGKT.

It belongs to the ATPase alpha/beta chains family. As to quaternary structure, F-type ATPases have 2 components, CF(1) - the catalytic core - and CF(0) - the membrane proton channel. CF(1) has five subunits: alpha(3), beta(3), gamma(1), delta(1), epsilon(1). CF(0) has three main subunits: a(1), b(2) and c(9-12). The alpha and beta chains form an alternating ring which encloses part of the gamma chain. CF(1) is attached to CF(0) by a central stalk formed by the gamma and epsilon chains, while a peripheral stalk is formed by the delta and b chains.

The protein resides in the cell membrane. It carries out the reaction ATP + H2O + 4 H(+)(in) = ADP + phosphate + 5 H(+)(out). Its function is as follows. Produces ATP from ADP in the presence of a proton gradient across the membrane. The alpha chain is a regulatory subunit. This is ATP synthase subunit alpha from Dehalococcoides mccartyi (strain ATCC BAA-2266 / KCTC 15142 / 195) (Dehalococcoides ethenogenes (strain 195)).